The sequence spans 654 residues: Probable Xaa-Pro aminopeptidase P (654 aa).

4 residues coordinate Mn(2+): Asp-449, Asp-460, Glu-558, and Glu-572.

It belongs to the peptidase M24B family. It depends on Mn(2+) as a cofactor.

It catalyses the reaction Release of any N-terminal amino acid, including proline, that is linked to proline, even from a dipeptide or tripeptide.. Functionally, catalyzes the removal of a penultimate prolyl residue from the N-termini of peptides. This chain is Probable Xaa-Pro aminopeptidase P (ampp), found in Aspergillus flavus (strain ATCC 200026 / FGSC A1120 / IAM 13836 / NRRL 3357 / JCM 12722 / SRRC 167).